Here is a 354-residue protein sequence, read N- to C-terminus: Dihydroorotate dehydrogenase (quinone) (354 aa).

FMN is bound by residues 61 to 65 (AGYDK) and alanine 85. Lysine 65 contributes to the substrate binding site. Substrate is bound at residue 110 to 114 (NRFGF). Positions 139 and 170 each coordinate FMN. Position 170 (asparagine 170) interacts with substrate. Serine 173 acts as the Nucleophile in catalysis. Residue asparagine 175 coordinates substrate. Residues lysine 211 and threonine 239 each coordinate FMN. A substrate-binding site is contributed by 240–241 (NT). Residues glycine 261, glycine 290, and 311–312 (YT) contribute to the FMN site.

The protein belongs to the dihydroorotate dehydrogenase family. Type 2 subfamily. Monomer. It depends on FMN as a cofactor.

Its subcellular location is the cell membrane. The enzyme catalyses (S)-dihydroorotate + a quinone = orotate + a quinol. It functions in the pathway pyrimidine metabolism; UMP biosynthesis via de novo pathway; orotate from (S)-dihydroorotate (quinone route): step 1/1. Its function is as follows. Catalyzes the conversion of dihydroorotate to orotate with quinone as electron acceptor. The protein is Dihydroorotate dehydrogenase (quinone) of Cereibacter sphaeroides (strain ATCC 17023 / DSM 158 / JCM 6121 / CCUG 31486 / LMG 2827 / NBRC 12203 / NCIMB 8253 / ATH 2.4.1.) (Rhodobacter sphaeroides).